Consider the following 288-residue polypeptide: Quinate/shikimate dehydrogenase (288 aa).

Substrate-binding residues include Lys-71 and Asp-107. NAD(+)-binding positions include 132–135 (AGGA), 155–158 (NRRD), Lys-205, 232–235 (CVYN), and Gly-255.

The protein belongs to the shikimate dehydrogenase family. In terms of assembly, homodimer.

It carries out the reaction L-quinate + NAD(+) = 3-dehydroquinate + NADH + H(+). It catalyses the reaction L-quinate + NADP(+) = 3-dehydroquinate + NADPH + H(+). The catalysed reaction is shikimate + NADP(+) = 3-dehydroshikimate + NADPH + H(+). The enzyme catalyses shikimate + NAD(+) = 3-dehydroshikimate + NADH + H(+). It functions in the pathway metabolic intermediate biosynthesis; chorismate biosynthesis; chorismate from D-erythrose 4-phosphate and phosphoenolpyruvate: step 4/7. In terms of biological role, the actual biological function of YdiB remains unclear, nor is it known whether 3-dehydroshikimate or quinate represents the natural substrate. Catalyzes the reversible NAD-dependent reduction of both 3-dehydroshikimate (DHSA) and 3-dehydroquinate to yield shikimate (SA) and quinate, respectively. It can use both NAD or NADP for catalysis, however it has higher catalytic efficiency with NAD. In Shigella sonnei (strain Ss046), this protein is Quinate/shikimate dehydrogenase.